Here is a 72-residue protein sequence, read N- to C-terminus: Translation initiation factor IF-1 (72 aa).

An S1-like domain is found at 1 to 72 (MSKDDVIQMQ…SRARIVFRAK (72 aa)).

It belongs to the IF-1 family. Component of the 30S ribosomal translation pre-initiation complex which assembles on the 30S ribosome in the order IF-2 and IF-3, IF-1 and N-formylmethionyl-tRNA(fMet); mRNA recruitment can occur at any time during PIC assembly.

It is found in the cytoplasm. Functionally, one of the essential components for the initiation of protein synthesis. Stabilizes the binding of IF-2 and IF-3 on the 30S subunit to which N-formylmethionyl-tRNA(fMet) subsequently binds. Helps modulate mRNA selection, yielding the 30S pre-initiation complex (PIC). Upon addition of the 50S ribosomal subunit IF-1, IF-2 and IF-3 are released leaving the mature 70S translation initiation complex. The chain is Translation initiation factor IF-1 from Albidiferax ferrireducens (strain ATCC BAA-621 / DSM 15236 / T118) (Rhodoferax ferrireducens).